The chain runs to 534 residues: Pentatricopeptide repeat-containing protein At5g50990 (534 aa).

PPR repeat units follow at residues 128–158 (NVITWNLMIGGYVRNVQYEEALKALKNMLSF), 164–198 (NKFSFASSLAACARLGDLHHAKWVHSLMIDSGIEL), 199–229 (NAILSSALVDVYAKCGDIGTSREVFYSVKRN), 230–264 (DVSIWNAMITGFATHGLATEAIRVFSEMEAEHVSP), 265–295 (DSITFLGLLTTCSHCGLLEEGKEYFGLMSRR), and 301–331 (KLEHYGAMVDLLGRAGRVKEAYELIESMPIE). The segment at 336–408 (IWRSLLSSSR…AKGKSWLEFG (73 aa)) is type E motif. Residues 409-439 (GMIHRFKAGDTSHIETKAIYKVLEGLIQKTK) form a type E(+) motif region. The interval 440 to 534 (SQGFVSDTDL…DGLCSCRDYW (95 aa)) is type DYW motif.

The protein belongs to the PPR family. PCMP-H subfamily.

The polypeptide is Pentatricopeptide repeat-containing protein At5g50990 (PCMP-H59) (Arabidopsis thaliana (Mouse-ear cress)).